The sequence spans 238 residues: RNA-free ribonuclease P (238 aa).

The protein belongs to the HARP family.

It catalyses the reaction Endonucleolytic cleavage of RNA, removing 5'-extranucleotides from tRNA precursor.. Its function is as follows. RNA-free RNase P that catalyzes the removal of the 5'-leader sequence from pre-tRNA to produce the mature 5'-terminus. The polypeptide is RNA-free ribonuclease P (Hyperthermus butylicus (strain DSM 5456 / JCM 9403 / PLM1-5)).